The chain runs to 397 residues: 2,3-bisphosphoglycerate-independent phosphoglycerate mutase (397 aa).

It belongs to the BPG-independent phosphoglycerate mutase family. A-PGAM subfamily.

The enzyme catalyses (2R)-2-phosphoglycerate = (2R)-3-phosphoglycerate. Its pathway is carbohydrate degradation; glycolysis; pyruvate from D-glyceraldehyde 3-phosphate: step 3/5. Functionally, catalyzes the interconversion of 2-phosphoglycerate and 3-phosphoglycerate. This Methanosarcina acetivorans (strain ATCC 35395 / DSM 2834 / JCM 12185 / C2A) protein is 2,3-bisphosphoglycerate-independent phosphoglycerate mutase.